The chain runs to 516 residues: 2,3-bisphosphoglycerate-independent phosphoglycerate mutase (516 aa).

2 residues coordinate Mn(2+): aspartate 14 and serine 64. The active-site Phosphoserine intermediate is the serine 64. Residues histidine 125, 155 to 156 (RD), arginine 187, arginine 193, 263 to 266 (RPDR), and lysine 337 each bind substrate. Mn(2+) is bound by residues aspartate 404, histidine 408, aspartate 445, histidine 446, and histidine 464.

This sequence belongs to the BPG-independent phosphoglycerate mutase family. Monomer. Requires Mn(2+) as cofactor.

It carries out the reaction (2R)-2-phosphoglycerate = (2R)-3-phosphoglycerate. It functions in the pathway carbohydrate degradation; glycolysis; pyruvate from D-glyceraldehyde 3-phosphate: step 3/5. Functionally, catalyzes the interconversion of 2-phosphoglycerate and 3-phosphoglycerate. The chain is 2,3-bisphosphoglycerate-independent phosphoglycerate mutase from Saccharophagus degradans (strain 2-40 / ATCC 43961 / DSM 17024).